Here is a 359-residue protein sequence, read N- to C-terminus: Homoserine dehydrogenase (359 aa).

Positions 13, 15, 16, and 41 each coordinate NAD(+). Val-16 serves as a coordination point for NADP(+). NADPH is bound at residue Val-16. Lys-60, Thr-93, Ser-94, and Lys-117 together coordinate NADPH. Residue Thr-93 coordinates NAD(+). Thr-93 contacts NADP(+). NADP(+) is bound at residue Lys-117. Na(+) is bound by residues Glu-143, Val-146, Ala-148, and Leu-150. Positions 205 and 208 each coordinate NADP(+). Positions 208 and 219 each coordinate L-homoserine. The active-site Proton donor is the Lys-223. A Glycyl lysine isopeptide (Lys-Gly) (interchain with G-Cter in ubiquitin) cross-link involves residue Lys-290. Gly-340 contributes to the NAD(+) binding site. Gly-340 lines the NADP(+) pocket. Gly-340 is an NADPH binding site.

It belongs to the homoserine dehydrogenase family. Homodimer. The cofactor is a metal cation.

It catalyses the reaction L-homoserine + NADP(+) = L-aspartate 4-semialdehyde + NADPH + H(+). The enzyme catalyses L-homoserine + NAD(+) = L-aspartate 4-semialdehyde + NADH + H(+). The protein operates within amino-acid biosynthesis; L-methionine biosynthesis via de novo pathway; L-homoserine from L-aspartate: step 3/3. It participates in amino-acid biosynthesis; L-threonine biosynthesis; L-threonine from L-aspartate: step 3/5. In terms of biological role, catalyzes the conversion of L-aspartate-beta-semialdehyde (L-Asa) to L-homoserine (L-Hse), the third step in the biosynthesis of amino acids that derive from aspartate (the aspartate family of amino acids), including methioinine and threonine, the latter of which is a precursor to isoleucine; production of homoserine leads to a branch-point in the pathway as it can either be O-phosphorylated for processing to threonine, or O-acylated for processing to methionine. The chain is Homoserine dehydrogenase (HOM6) from Saccharomyces cerevisiae (strain ATCC 204508 / S288c) (Baker's yeast).